The primary structure comprises 454 residues: Neuronal acetylcholine receptor subunit alpha-5 (454 aa).

The segment at 1–26 (MPLRARSRKPGAGPAARAPQAGVSEP) is disordered. The N-terminal stretch at 1–29 (MPLRARSRKPGAGPAARAPQAGVSEPSFV) is a signal peptide. A compositionally biased stretch (low complexity) spans 10–22 (PGAGPAARAPQAG). Residues 30–240 (AKSEDRLFKH…IIRRLPLFYT (211 aa)) are Extracellular-facing. Asparagine 55, asparagine 169, and asparagine 215 each carry an N-linked (GlcNAc...) asparagine glycan. Cysteine 156 and cysteine 170 are joined by a disulfide. Cysteines 220 and 221 form a disulfide. Transmembrane regions (helical) follow at residues 241-261 (LFLI…FYLP), 270-290 (LCTS…EIIP), and 303-323 (LVFT…AINI). At 324–416 (HHRSSSTHNA…KFIAQVLDRM (93 aa)) the chain is on the cytoplasmic side. A helical transmembrane segment spans residues 417-437 (FLWAFLLVSIIGSLVLFIPVI). Over 438–454 (HKWASIIVPVHIGSTNT) the chain is Extracellular.

Belongs to the ligand-gated ion channel (TC 1.A.9) family. Acetylcholine receptor (TC 1.A.9.1) subfamily. Alpha-5/CHRNA5 sub-subfamily. Neuronal AChR that forms heteropentamers composed of two different type of subunits: alpha and non-alpha (beta). CHRNA5/alpha-5 subunit is only able to form functional nAChRs when co-assembled with another alpha subunit, can be combined to CHRNA4/alpha-4 or CHRNA3/alpha-3 and CHRNB4/beta-4 or CHRNB2/beta-2 to give rise to functional receptors. Interacts with LYPD6.

It localises to the synaptic cell membrane. The protein localises to the cell membrane. The catalysed reaction is Ca(2+)(in) = Ca(2+)(out). It carries out the reaction K(+)(in) = K(+)(out). The enzyme catalyses Na(+)(in) = Na(+)(out). Its activity is regulated as follows. Activated by a myriad of ligands such as acetylcholine, cytisine, nicotine, choline and epibatidine. Its function is as follows. Component of neuronal acetylcholine receptors (nAChRs) that function as pentameric, ligand-gated cation channels with high calcium permeability among other activities. nAChRs are excitatory neurotrasnmitter receptors formed by a collection of nAChR subunits known to mediate synaptic transmission in the nervous system and the neuromuscular junction. Each nAchR subunit confers differential attributes to channel properties, including activation, deactivation and desensitization kinetics, pH sensitivity, cation permeability, and binding to allosteric modulators. Has an accessory rather than functional role and is only able to form functional nAChRs when co-assembled with another beta subunit. Participates in pentameric assemblies along with CHRNA3, CHRNA4, CHRNB2 and CHRNB4. Increases receptor sensitivity to acetylcholine and nicotine when associated with CHRNA4 and CHRNB2. Plays a role in nicotine addiction. The chain is Neuronal acetylcholine receptor subunit alpha-5 (CHRNA5) from Gallus gallus (Chicken).